We begin with the raw amino-acid sequence, 648 residues long: Sodium/nucleoside cotransporter 1 (648 aa).

Residues 1-80 (MADNTQRQRE…ARSFCREHRQ (80 aa)) lie on the Cytoplasmic side of the membrane. A helical membrane pass occupies residues 81–104 (LFGWICKGLLSTACLGFLMVACLL). Residues 105–109 (DLQRA) lie on the Extracellular side of the membrane. A helical transmembrane segment spans residues 110–128 (LALLIITCVVLVFLAYDLL). Over 129–147 (KRLLGSKLRRCVKFQGHSC) the chain is Cytoplasmic. A helical transmembrane segment spans residues 148–167 (LSLWLKRGLALAAGVGLILW). At 168 to 178 (LSLDTAQRPEQ) the chain is on the extracellular side. Residues 179–195 (LVSFAGICVFLVLLFAG) form a helical membrane-spanning segment. Residues 196–201 (SKHHRA) lie on the Cytoplasmic side of the membrane. Residues 202–222 (VSWRAVSWGLGLQFVLGLFVI) form a helical membrane-spanning segment. The Extracellular segment spans residues 223–261 (RTEPGFIAFQWLGDQIQVFLSYTEAGSSFVFGEALVKDV). The helical transmembrane segment at 262-283 (FAFQVLPIIIFFSCVMSVLYYL) threads the bilayer. Residues 284–294 (GLMQWVILKIA) are Cytoplasmic-facing. The chain crosses the membrane as a helical span at residues 295–318 (WLMQVTMGTSATETLSVAGNIFVS). Residues 319-337 (QTEAPLLIRPYLADMTLSE) lie on the Extracellular side of the membrane. A helical membrane pass occupies residues 338-360 (VHVVMTGGYATIAGSLLGAYISF). At 361-366 (GIDAAS) the chain is on the cytoplasmic side. The chain crosses the membrane as a helical span at residues 367–386 (LIAASVMAAPCALALSKLVY). The Extracellular portion of the chain corresponds to 387-423 (PEVEESKFRSENGVKLTYGDAQNLLEAASAGAAISVK). A helical transmembrane segment spans residues 424 to 446 (VVANIAANLIAFLAVLAFVNAAL). The Cytoplasmic segment spans residues 447–457 (SWLGDMVDIQG). The helical transmembrane segment at 458-479 (LSFQLICSYVLRPVAFLMGVAW) threads the bilayer. Residues 480-534 (EDCPVVAELLGIKFFLNEFVAYQELSQYKQRRLAGAEEWLGDKKQWISVRAEILT) are Extracellular-facing. A helical membrane pass occupies residues 535-558 (TYALCGFANFSSIGIMLGGLTSLV). Residues 559–569 (PQRRSDFSQIV) are Cytoplasmic-facing. The helical transmembrane segment at 570 to 592 (LRALITGAFVSLLNACVAGILYV) threads the bilayer. At 593–648 (PRGVEVDCVSLLNQTVSSSSFEVYLCCRQVFQSTSSEFSQVALDNCCRFYNHTVCT) the chain is on the extracellular side. N-linked (GlcNAc...) asparagine glycans are attached at residues asparagine 605 and asparagine 643.

Belongs to the concentrative nucleoside transporter (CNT) (TC 2.A.41) family. In terms of processing, N-glycosylated. N-glycosylation is required for localization to the plasma membrane and the transporter activity. Expressed predominantly in the brush-border membranes of the polarized epithelial cells of jejunum and renal cortical tubules and in the bile canalicular membranes of liver parenchymal cells.

Its subcellular location is the cell membrane. It is found in the apical cell membrane. It carries out the reaction uridine(out) + Na(+)(out) = uridine(in) + Na(+)(in). The enzyme catalyses thymidine(out) + Na(+)(out) = thymidine(in) + Na(+)(in). It catalyses the reaction cytidine(out) + Na(+)(out) = cytidine(in) + Na(+)(in). The catalysed reaction is adenosine(out) + Na(+)(out) = adenosine(in) + Na(+)(in). Its activity is regulated as follows. Due to its high apparent affinity but slow transport, adenosine could act as a negative regulator of pyrimidine transport under some conditions. Sodium and pyrimidine nucleoside symporter of the plasma membrane that imports uridine, thymidine and cytidine into cells by coupling their transport to the transmembrane sodium electrochemical gradient. Also transports adenosine, an atypical substrate transported with high apparent affinity, but low maximum velocity. Therefore, exhibits the transport characteristics of the nucleoside transport system cit or N2 subtype (N2/cit). Involved in renal nucleoside (re)absorption. The protein is Sodium/nucleoside cotransporter 1 of Rattus norvegicus (Rat).